The sequence spans 798 residues: Type 2 DNA topoisomerase 6 subunit B (798 aa).

Residues asparagine 60, aspartate 91, serine 112–arginine 113, and glycine 122–serine 129 each bind ATP. Basic and acidic residues predominate over residues glutamate 221 to glutamate 233. A disordered region spans residues glutamate 221 to histidine 245. Residue lysine 629 participates in ATP binding.

Belongs to the TOP6B family. As to quaternary structure, homodimer. Heterotetramer of two Top6A and two Top6B chains.

The enzyme catalyses ATP-dependent breakage, passage and rejoining of double-stranded DNA.. Relaxes both positive and negative superturns and exhibits a strong decatenase activity. This chain is Type 2 DNA topoisomerase 6 subunit B, found in Natronomonas pharaonis (strain ATCC 35678 / DSM 2160 / CIP 103997 / JCM 8858 / NBRC 14720 / NCIMB 2260 / Gabara) (Halobacterium pharaonis).